Here is a 1525-residue protein sequence, read N- to C-terminus: Receptor-type guanylate cyclase Gyc76C (1525 aa).

Residues Met1 to Cys19 form the signal peptide. Topologically, residues Ser20 to Thr493 are extracellular. 9 N-linked (GlcNAc...) asparagine glycosylation sites follow: Asn74, Asn184, Asn222, Asn338, Asn383, Asn394, Asn416, Asn428, and Asn458. Residues Val494 to Tyr514 form a helical membrane-spanning segment. At Arg515–Val1525 the chain is on the cytoplasmic side. Positions Pro547–Met824 constitute a Protein kinase domain. ATP is bound by residues Met553–Arg561 and Lys581. Residues Thr896–Glu1026 enclose the Guanylate cyclase domain. Asp901, Ile902, and Asp945 together coordinate Mg(2+). Disordered stretches follow at residues Gly1122–Gly1168, Glu1192–Gln1217, and Glu1256–Ser1308. Basic and acidic residues predominate over residues Glu1147–Pro1162. The segment covering Gly1202–Ser1212 has biased composition (gly residues). The span at Leu1282–Ser1308 shows a compositional bias: polar residues.

This sequence belongs to the adenylyl cyclase class-4/guanylyl cyclase family. Interacts with the semaphorin 1A receptor PlexA; PlexA enhances Gyc76C catalytic activity. Interacts with the PDZ domain-containing protein kermit; kermit increases cell surface expression of Gyc76C. As to expression, in the adult, widely distributed in the head and thorax with highest levels in the optic lobe and central brain and expression also detected in the retina. Expressed at similar levels in adult head and body. In females, highly expressed in oocytes with lower levels in the digestive tract. In mid-embryogenesis, enriched in the circular visceral mesoderm that overlies the migrating salivary gland and in the fat body that underlies the gland but at background levels in the gland itself. In late embryogenesis, detected in the mature salivary gland, in the somatic body wall muscles and the tendon cells to which the muscles attach, and in the constricting midgut. Also expressed in migrating tracheal cells at mid-embryogenesis and in the developed trachea at the end of embryogenesis with enrichment in the apical domains.

The protein localises to the cell membrane. It catalyses the reaction GTP = 3',5'-cyclic GMP + diphosphate. Its function is as follows. Guanylate cyclase involved in the production of the second messenger cGMP. Acts as a receptor for the NPLP1-4 peptide and modulates the innate immune IMD pathway in response to salt stress by inducing nuclear translocation of NF-kappa-B protein Rel which leads to increased expression of the antimicrobial peptide diptericin. Plays a role in Sema-1a-mediated axon repulsion which is required for the correct establishment of neuromuscular connectivity. Required in developing embryonic somatic muscle for correct patterning of ventral and lateral muscles and for localization of integrin beta-ps at developing dorsal muscle myotendinous junctions. Required for invagination, migration and lumen shape of the embryonic salivary gland by regulating the localization of the integrin-binding protein rhea/Talin to the visceral mesoderm surrounding the gland and maintaining the laminin matrix. Required in the developing wing to regulate extracellular matrix (ECM) organization by activating the cGMP-dependent protein kinase For which represses the activity of matrix metalloproteases such as Mmp2 and decreases ECM matrix reorganization. In Drosophila melanogaster (Fruit fly), this protein is Receptor-type guanylate cyclase Gyc76C.